The chain runs to 290 residues: ATP phosphoribosyltransferase (290 aa).

The protein belongs to the ATP phosphoribosyltransferase family. Long subfamily. Mg(2+) is required as a cofactor.

It is found in the cytoplasm. The catalysed reaction is 1-(5-phospho-beta-D-ribosyl)-ATP + diphosphate = 5-phospho-alpha-D-ribose 1-diphosphate + ATP. Its pathway is amino-acid biosynthesis; L-histidine biosynthesis; L-histidine from 5-phospho-alpha-D-ribose 1-diphosphate: step 1/9. Feedback inhibited by histidine. Catalyzes the condensation of ATP and 5-phosphoribose 1-diphosphate to form N'-(5'-phosphoribosyl)-ATP (PR-ATP). Has a crucial role in the pathway because the rate of histidine biosynthesis seems to be controlled primarily by regulation of HisG enzymatic activity. The polypeptide is ATP phosphoribosyltransferase (hisG) (Saccharolobus solfataricus (strain ATCC 35092 / DSM 1617 / JCM 11322 / P2) (Sulfolobus solfataricus)).